The primary structure comprises 287 residues: Elongation factor Ts (287 aa).

Residues 80 to 83 (TDFL) form an involved in Mg(2+) ion dislocation from EF-Tu region.

Belongs to the EF-Ts family.

It localises to the cytoplasm. In terms of biological role, associates with the EF-Tu.GDP complex and induces the exchange of GDP to GTP. It remains bound to the aminoacyl-tRNA.EF-Tu.GTP complex up to the GTP hydrolysis stage on the ribosome. The sequence is that of Elongation factor Ts from Stutzerimonas stutzeri (strain A1501) (Pseudomonas stutzeri).